A 480-amino-acid polypeptide reads, in one-letter code: Probable glycosyltransferase At5g25310 (480 aa).

Residues 1–10 (MDKFQSKFTR) are Cytoplasmic-facing. The chain crosses the membrane as a helical; Signal-anchor for type II membrane protein span at residues 11–31 (FGFISICFGSIALVLLISHCS). The Lumenal portion of the chain corresponds to 32 to 480 (TSFFDYSFQK…WLRRLNLKLT (449 aa)). Residues N85, N120, N243, N271, and N281 are each glycosylated (N-linked (GlcNAc...) asparagine).

Belongs to the glycosyltransferase 47 family.

The protein localises to the golgi apparatus membrane. In terms of biological role, may be involved in cell wall biosynthesis. The sequence is that of Probable glycosyltransferase At5g25310 from Arabidopsis thaliana (Mouse-ear cress).